The primary structure comprises 434 residues: 3-phosphoshikimate 1-carboxyvinyltransferase (434 aa).

Residues Lys-22, Ser-23, and Arg-27 each contribute to the 3-phosphoshikimate site. Lys-22 is a binding site for phosphoenolpyruvate. The phosphoenolpyruvate site is built by Gly-93 and Arg-121. The 3-phosphoshikimate site is built by Ser-168, Ser-169, Gln-170, Ser-199, Asp-320, and Lys-347. Residue Gln-170 participates in phosphoenolpyruvate binding. Asp-320 (proton acceptor) is an active-site residue. Phosphoenolpyruvate contacts are provided by Arg-351, Arg-394, and Lys-419.

Belongs to the EPSP synthase family. In terms of assembly, monomer.

The protein localises to the cytoplasm. It catalyses the reaction 3-phosphoshikimate + phosphoenolpyruvate = 5-O-(1-carboxyvinyl)-3-phosphoshikimate + phosphate. It functions in the pathway metabolic intermediate biosynthesis; chorismate biosynthesis; chorismate from D-erythrose 4-phosphate and phosphoenolpyruvate: step 6/7. In terms of biological role, catalyzes the transfer of the enolpyruvyl moiety of phosphoenolpyruvate (PEP) to the 5-hydroxyl of shikimate-3-phosphate (S3P) to produce enolpyruvyl shikimate-3-phosphate and inorganic phosphate. This Burkholderia orbicola (strain AU 1054) protein is 3-phosphoshikimate 1-carboxyvinyltransferase.